Consider the following 947-residue polypeptide: Serrate RNA effector molecule homolog (947 aa).

Disordered stretches follow at residues 1–100, 285–493, 643–666, and 855–890; these read MADS…GDGD, ERKA…SVGK, DPNS…FNSQ, and NYLR…YRPP. Basic and acidic residues-rich tracts occupy residues 8-33 and 40-49; these read YDRK…DRRP and ARDEWAERNP. Residue Tyr-79 is modified to Phosphotyrosine. Ser-81 is modified (phosphoserine). Over residues 285-308 the composition is skewed to basic and acidic residues; sequence ERKAEPMQSVKEVEKTINSPKDEI. Thr-300 is subject to Phosphothreonine. Ser-303, Ser-330, Ser-354, and Ser-357 each carry phosphoserine. Residues 330–341 are compositionally biased toward acidic residues; sequence SDEENWDDDNDA. The span at 345–366 shows a compositional bias: basic and acidic residues; sequence TPKKELAEDSKDSDSKPEEKQL. The segment covering 367–376 has biased composition (basic residues); that stretch reads NKKKTKKRKR. Residues 393-427 are compositionally biased toward basic and acidic residues; sequence DEEKLKEKYDVEDGLRTEQKIEAEKDRQEATKAKQ. Residue Ser-431 is modified to Phosphoserine. Residues 465–477 are compositionally biased toward polar residues; sequence EISSNPIKNTDNG. The segment covering 478-493 has biased composition (basic and acidic residues); sequence DSSKVEEDEEKPSVGK. Phosphoserine is present on Ser-646. Polar residues predominate over residues 647–666; it reads ARANESSENGSGSTYGFNSQ.

The protein belongs to the ARS2 family. As to quaternary structure, interacts with cbp20, Dcr-2 and pasha.

The protein resides in the nucleus. Acts as a mediator between the cap-binding complex (CBC) and RNA-mediated gene silencing (RNAi). Involved in innate immunity via the short interfering RNAs (siRNAs) processing machinery by restricting the viral RNA production. Also involved microRNA (miRNA)-mediated silencing by contributing to the stability and delivery of primary miRNA transcripts to the primary miRNA processing complex containing drosha and pasha. This chain is Serrate RNA effector molecule homolog (Ars2), found in Drosophila sechellia (Fruit fly).